A 1161-amino-acid polypeptide reads, in one-letter code: DNA-directed RNA polymerase subunit beta (1161 aa).

It belongs to the RNA polymerase beta chain family. The RNAP catalytic core consists of 2 alpha, 1 beta, 1 beta' and 1 omega subunit. When a sigma factor is associated with the core the holoenzyme is formed, which can initiate transcription.

The catalysed reaction is RNA(n) + a ribonucleoside 5'-triphosphate = RNA(n+1) + diphosphate. Its function is as follows. DNA-dependent RNA polymerase catalyzes the transcription of DNA into RNA using the four ribonucleoside triphosphates as substrates. The protein is DNA-directed RNA polymerase subunit beta of Streptomyces avermitilis (strain ATCC 31267 / DSM 46492 / JCM 5070 / NBRC 14893 / NCIMB 12804 / NRRL 8165 / MA-4680).